Consider the following 207-residue polypeptide: MSERLLVLVRHGQSEWNLKNLFTGWKDPDLTAQGVSEAKDAGRKLKAHGLSFDVAFTSELTRAQHTLKLILDELGQPGLPTSKNLALNERDYGDLSGLNKDDARAKWGEEQVHVWRRSYDVPPPGGESLKDTLARALPYYVQEILPGVLNGQRTLVAAHGNSLRALIMVLEKLTPEGILKRELATGVPIIYRLKADSTVESKLDLAG.

Substrate is bound by residues 10–17 (RHGQSEWN), 23–24 (TG), Arg-62, 89–92 (ERDY), Lys-100, 116–117 (RR), and 160–161 (GN). Catalysis depends on His-11, which acts as the Tele-phosphohistidine intermediate. Glu-89 functions as the Proton donor/acceptor in the catalytic mechanism.

The protein belongs to the phosphoglycerate mutase family. BPG-dependent PGAM subfamily. Homodimer.

The catalysed reaction is (2R)-2-phosphoglycerate = (2R)-3-phosphoglycerate. Its pathway is carbohydrate degradation; glycolysis; pyruvate from D-glyceraldehyde 3-phosphate: step 3/5. Its function is as follows. Catalyzes the interconversion of 2-phosphoglycerate and 3-phosphoglycerate. This is 2,3-bisphosphoglycerate-dependent phosphoglycerate mutase from Bradyrhizobium sp. (strain ORS 278).